The chain runs to 80 residues: RNA-binding protein Hfq (80 aa).

The region spanning 10-69 (DPFLNALRKEHVPVSIYLVNGIKLQGNIESFDQYVVLLRNTVTQMVYKHAISTVVPARPV) is the Sm domain.

The protein belongs to the Hfq family. In terms of assembly, homohexamer.

RNA chaperone that binds small regulatory RNA (sRNAs) and mRNAs to facilitate mRNA translational regulation in response to envelope stress, environmental stress and changes in metabolite concentrations. Also binds with high specificity to tRNAs. This is RNA-binding protein Hfq from Burkholderia ambifaria (strain ATCC BAA-244 / DSM 16087 / CCUG 44356 / LMG 19182 / AMMD) (Burkholderia cepacia (strain AMMD)).